We begin with the raw amino-acid sequence, 101 residues long: Aspartyl/glutamyl-tRNA(Asn/Gln) amidotransferase subunit C (101 aa).

This sequence belongs to the GatC family. Heterotrimer of A, B and C subunits.

It carries out the reaction L-glutamyl-tRNA(Gln) + L-glutamine + ATP + H2O = L-glutaminyl-tRNA(Gln) + L-glutamate + ADP + phosphate + H(+). The catalysed reaction is L-aspartyl-tRNA(Asn) + L-glutamine + ATP + H2O = L-asparaginyl-tRNA(Asn) + L-glutamate + ADP + phosphate + 2 H(+). Functionally, allows the formation of correctly charged Asn-tRNA(Asn) or Gln-tRNA(Gln) through the transamidation of misacylated Asp-tRNA(Asn) or Glu-tRNA(Gln) in organisms which lack either or both of asparaginyl-tRNA or glutaminyl-tRNA synthetases. The reaction takes place in the presence of glutamine and ATP through an activated phospho-Asp-tRNA(Asn) or phospho-Glu-tRNA(Gln). The protein is Aspartyl/glutamyl-tRNA(Asn/Gln) amidotransferase subunit C of Lactobacillus delbrueckii subsp. bulgaricus (strain ATCC 11842 / DSM 20081 / BCRC 10696 / JCM 1002 / NBRC 13953 / NCIMB 11778 / NCTC 12712 / WDCM 00102 / Lb 14).